The chain runs to 281 residues: uncharacterized protein (281 aa).

This is an uncharacterized protein from Mycoplasma pneumoniae (strain ATCC 29342 / M129 / Subtype 1) (Mycoplasmoides pneumoniae).